Consider the following 478-residue polypeptide: Proline--tRNA ligase (478 aa).

Belongs to the class-II aminoacyl-tRNA synthetase family. ProS type 3 subfamily. Homodimer.

It is found in the cytoplasm. It carries out the reaction tRNA(Pro) + L-proline + ATP = L-prolyl-tRNA(Pro) + AMP + diphosphate. Catalyzes the attachment of proline to tRNA(Pro) in a two-step reaction: proline is first activated by ATP to form Pro-AMP and then transferred to the acceptor end of tRNA(Pro). This Oceanobacillus iheyensis (strain DSM 14371 / CIP 107618 / JCM 11309 / KCTC 3954 / HTE831) protein is Proline--tRNA ligase.